The sequence spans 274 residues: MAIKSYKPTSAGRRHQTCSTFEEITTSQPERSLVVKLKKTGGRNNFGRITSRHIGGGHKQKYRIIDFRRDKRDIPAKVASVEYDPYRSARIALLNYADGEKRYIIAPLDLKVGDTVVASTSADIKPGNALPIRSIPLGTIIHNIELKIGKGAQLARSAGTFAQLMAKEEKYAQVKLPSGEVRMVLMDCMATIGQVGNLDHENVSIGKAGRSRWLGKRPKVRGVAMNPVDHPHGGGEGRTSGGRHPVTPWGIPTKGYKTRTNKTSTRFIVKRRTK.

The interval 223–258 is disordered; that stretch reads VAMNPVDHPHGGGEGRTSGGRHPVTPWGIPTKGYKT.

Belongs to the universal ribosomal protein uL2 family. In terms of assembly, part of the 50S ribosomal subunit. Forms a bridge to the 30S subunit in the 70S ribosome.

One of the primary rRNA binding proteins. Required for association of the 30S and 50S subunits to form the 70S ribosome, for tRNA binding and peptide bond formation. It has been suggested to have peptidyltransferase activity; this is somewhat controversial. Makes several contacts with the 16S rRNA in the 70S ribosome. This Geotalea daltonii (strain DSM 22248 / JCM 15807 / FRC-32) (Geobacter daltonii) protein is Large ribosomal subunit protein uL2.